Reading from the N-terminus, the 1496-residue chain is Chromosome partition protein MukB (1496 aa).

63 to 70 (GGNGAGKS) provides a ligand contact to ATP. Coiled coils occupy residues 328–493 (KLEL…QRLS) and 536–632 (KMQA…APAW). Positions 694–811 (PDGSDDVRLN…EVPLFGRAAR (118 aa)) are flexible hinge. Coiled coils occupy residues 861–1171 (NPEE…SAEE) and 1235–1291 (IDAI…LQNI). Basic and acidic residues predominate over residues 1082–1091 (RARSRRDELQ). Residues 1082–1101 (RARSRRDELQQRLSQQRSRK) are disordered.

Belongs to the SMC family. MukB subfamily. Homodimerization via its hinge domain. Binds to DNA via its C-terminal region. Interacts, and probably forms a ternary complex, with MukE and MukF via its C-terminal region. The complex formation is stimulated by calcium or magnesium. Interacts with tubulin-related protein FtsZ.

The protein resides in the cytoplasm. It is found in the nucleoid. Its function is as follows. Plays a central role in chromosome condensation, segregation and cell cycle progression. Functions as a homodimer, which is essential for chromosome partition. Involved in negative DNA supercoiling in vivo, and by this means organize and compact chromosomes. May achieve or facilitate chromosome segregation by condensation DNA from both sides of a centrally located replisome during cell division. The polypeptide is Chromosome partition protein MukB (Actinobacillus pleuropneumoniae serotype 3 (strain JL03)).